Consider the following 316-residue polypeptide: Peroxidase 31 (316 aa).

The N-terminal stretch at 1–19 (MASLKSLFLLFLFFFTAQS) is a signal peptide. Intrachain disulfides connect C30/C111, C63/C68, C117/C312, and C196/C222. Catalysis depends on H61, which acts as the Proton acceptor. Positions 62, 67, 69, and 71 each coordinate Ca(2+). P159 contacts substrate. H189 contributes to the heme b binding site. S190 contacts Ca(2+). N-linked (GlcNAc...) asparagine glycosylation occurs at N206. The Ca(2+) site is built by D236, T239, and D244.

This sequence belongs to the peroxidase family. Classical plant (class III) peroxidase subfamily. Heme b serves as cofactor. Ca(2+) is required as a cofactor.

It is found in the secreted. It carries out the reaction 2 a phenolic donor + H2O2 = 2 a phenolic radical donor + 2 H2O. Its function is as follows. Removal of H(2)O(2), oxidation of toxic reductants, biosynthesis and degradation of lignin, suberization, auxin catabolism, response to environmental stresses such as wounding, pathogen attack and oxidative stress. These functions might be dependent on each isozyme/isoform in each plant tissue. This Arabidopsis thaliana (Mouse-ear cress) protein is Peroxidase 31 (PER31).